Reading from the N-terminus, the 723-residue chain is Peroxisomal bifunctional enzyme (723 aa).

The interval 1–282 (MAEYTRLHNA…LAERKANKWS (282 aa)) is enoyl-CoA hydratase / isomerase. The residue at position 38 (K38) is an N6-succinyllysine. G101 provides a ligand contact to substrate. Position 165 is an N6-acetyllysine; alternate (K165). Position 165 is an N6-succinyllysine; alternate (K165). Residue K171 is modified to N6-acetyllysine. K219 carries the N6-acetyllysine; alternate modification. N6-succinyllysine; alternate is present on K219. K250 carries the post-translational modification N6-acetyllysine. N6-succinyllysine occurs at positions 280 and 290. The tract at residues 283–572 (TPSGASWKTA…DVLCELGRFG (290 aa)) is 3-hydroxyacyl-CoA dehydrogenase. N6-acetyllysine is present on residues K346, K350, and K464. Residue K532 is modified to N6-succinyllysine. T548 carries the phosphothreonine modification. K577 carries the post-translational modification N6-succinyllysine. N6-acetyllysine; alternate is present on residues K584, K591, and K710. Residues K584, K591, and K710 each carry the N6-succinyllysine; alternate modification. Positions 699–723 (KKLASQGNPPQKEWQSLAGSPSSKL) are disordered. Over residues 703-723 (SQGNPPQKEWQSLAGSPSSKL) the composition is skewed to polar residues. At S718 the chain carries Phosphoserine. The Microbody targeting signal motif lies at 721–723 (SKL). N6-succinyllysine is present on K722.

It in the N-terminal section; belongs to the enoyl-CoA hydratase/isomerase family. In the C-terminal section; belongs to the 3-hydroxyacyl-CoA dehydrogenase family. Monomer. Acetylated, leading to enhanced enzyme activity. Acetylation is enhanced by up to 80% after treatment either with trichostin A (TSA) or with nicotinamide (NAM) with highest increase on Lys-346. Acetylation and enzyme activity increased by about 1.5% on addition of fatty acids.

It localises to the peroxisome. It carries out the reaction a (3S)-3-hydroxyacyl-CoA = a (2E)-enoyl-CoA + H2O. The enzyme catalyses a 4-saturated-(3S)-3-hydroxyacyl-CoA = a (3E)-enoyl-CoA + H2O. It catalyses the reaction a (3Z)-enoyl-CoA = a 4-saturated (2E)-enoyl-CoA. The catalysed reaction is a (3E)-enoyl-CoA = a 4-saturated (2E)-enoyl-CoA. It carries out the reaction a (3S)-3-hydroxyacyl-CoA + NAD(+) = a 3-oxoacyl-CoA + NADH + H(+). The enzyme catalyses (2S,3S)-3-hydroxy-2-methylbutanoyl-CoA = (2E)-2-methylbut-2-enoyl-CoA + H2O. It catalyses the reaction (3S)-hydroxyhexadecanoyl-CoA + NAD(+) = 3-oxohexadecanoyl-CoA + NADH + H(+). The catalysed reaction is (3S)-hydroxyhexadecanoyl-CoA = (2E)-hexadecenoyl-CoA + H2O. It carries out the reaction (2E)-hexadecenedioyl-CoA + H2O = (3S)-hydroxyhexadecanedioyl-CoA. The enzyme catalyses (3S)-hydroxyhexadecanedioyl-CoA + NAD(+) = 3-oxohexadecanedioyl-CoA + NADH + H(+). It catalyses the reaction (3E,5Z)-tetradecadienoyl-CoA = (2E,5Z)-tetradecadienoyl-CoA. The catalysed reaction is (3E,5Z)-octadienoyl-CoA = (2E,5Z)-octadienoyl-CoA. It carries out the reaction (3S)-hydroxydecanoyl-CoA + NAD(+) = 3-oxodecanoyl-CoA + NADH + H(+). The enzyme catalyses (3E)-decenoyl-CoA = (2E)-decenoyl-CoA. It catalyses the reaction (3Z)-hexenoyl-CoA = (2E)-hexenoyl-CoA. The catalysed reaction is (3E)-hexenoyl-CoA = (2E)-hexenoyl-CoA. It carries out the reaction (3S)-hydroxydecanoyl-CoA = (2E)-decenoyl-CoA + H2O. The enzyme catalyses (3S)-hydroxyhexanoyl-CoA = (2E)-hexenoyl-CoA + H2O. The protein operates within lipid metabolism; fatty acid beta-oxidation. With respect to regulation, enzyme activity enhanced by acetylation. In terms of biological role, peroxisomal trifunctional enzyme possessing 2-enoyl-CoA hydratase, 3-hydroxyacyl-CoA dehydrogenase, and delta 3, delta 2-enoyl-CoA isomerase activities. Catalyzes two of the four reactions of the long chain fatty acids peroxisomal beta-oxidation pathway. Can also use branched-chain fatty acids such as 2-methyl-2E-butenoyl-CoA as a substrate, which is hydrated into (2S,3S)-3-hydroxy-2-methylbutanoyl-CoA. Optimal isomerase for 2,5 double bonds into 3,5 form isomerization in a range of enoyl-CoA species. Also able to isomerize both 3-cis and 3-trans double bonds into the 2-trans form in a range of enoyl-CoA species. Regulates the amount of medium-chain dicarboxylic fatty acids which are essential regulators of all fatty acid oxidation pathways. Also involved in the degradation of long-chain dicarboxylic acids through peroxisomal beta-oxidation. This Pongo abelii (Sumatran orangutan) protein is Peroxisomal bifunctional enzyme (EHHADH).